Here is a 628-residue protein sequence, read N- to C-terminus: MTRIVWMIGGAQGLGVDTSANIFGNAVAKAGYYLFGNREYYSNIKGRHSYFEVVISEKPIRSLSSYVNILASFDAETVFQHFTETKEYLIYNVEYENTTVDLVKSMEPEMAEQVKEALSKERLGFTIKDVLEYLKRRGVKVIGFNYTELIKKIADTFKVPMSVVERAKNMIAVGASYGLLGLKFDYLKDAISSTFKNELFIKFNTMAAELGYNSVPNVYKLQEYKIEKQRIQVDGNTISAMGKLAGGLRFQSYYPITPASDESVYIEANQNLDMIVEGNELRKGGVVVVQAEDELAAINMAVGAALTGVRSATATSGPGFSLMSEGISWAGMNEVPVVITYYMRGAPATGLPTRSGQADLKFALNVGHGEFPRIVIASGDHVEIFWDAIWALNLAEKYQTPVIHIIEKTLANAYSVFEEELITNRPYVIERGKIVKPTSDYFNRFEVTEDGISPRVFLGQASIFYTGDEHNEEGHITENSINRMKMYEKRNKKLETADKEIPEEQRVNIVGDADIVLLTWGSPKGAILDAMEELSKDGIKTMMVQVKMFNPYPKNLMKKILSGKSKIIAVENNYNAQGAEVLAEKTGIFATNYILKWTGRPITREEVIEGIKKILERDEKRVVLYGGA.

A YPITP motif motif is present at residues 254 to 258 (YPITP). Residues threonine 257 and arginine 344 each contribute to the substrate site.

As to quaternary structure, heterodimer composed of an alpha and a beta subunit.

It catalyses the reaction a 2-oxocarboxylate + 2 oxidized [2Fe-2S]-[ferredoxin] + CoA = an acyl-CoA + 2 reduced [2Fe-2S]-[ferredoxin] + CO2 + H(+). Its function is as follows. Catalyzes the coenzyme A-dependent oxidative decarboxylation of different 2-oxoacids such as 2-oxoglutarate, pyruvate and 2-oxobutyrate to form their CoA derivatives. The polypeptide is 2-oxoacid:ferredoxin oxidoreductase 2, subunit alpha (Sulfurisphaera tokodaii (strain DSM 16993 / JCM 10545 / NBRC 100140 / 7) (Sulfolobus tokodaii)).